Reading from the N-terminus, the 233-residue chain is Protein Mis18-alpha (233 aa).

3 positions are modified to phosphoserine: Ser-36, Ser-39, and Ser-40. Residues 80–178 (PLVFLCSGCR…NVEAVESYVL (99 aa)) form the Mis18 domain. Residues Cys-85, Cys-88, Cys-141, and Cys-144 each contribute to the Zn(2+) site. A Glycyl lysine isopeptide (Lys-Gly) (interchain with G-Cter in SUMO2) cross-link involves residue Lys-162. Ser-233 carries the phosphoserine modification.

This sequence belongs to the mis18 family. In terms of assembly, homodimer, and heterodimer with OIP5/MIS18B. Identified in a complex containing MIS18A, OIP5/MIS18B, MIS18BP1, RBBP7 and RBBP4.

The protein localises to the nucleus. It localises to the chromosome. Its subcellular location is the centromere. In terms of biological role, required for recruitment of CENPA to centromeres and normal chromosome segregation during mitosis. This is Protein Mis18-alpha (MIS18A) from Plecturocebus moloch (Dusky titi monkey).